The chain runs to 428 residues: UPF0229 protein YeaH (428 aa).

The segment covering 78–90 (GNDHFIQNDRIER) has biased composition (basic and acidic residues). Positions 78–111 (GNDHFIQNDRIERPQGGGGGGSGSGQGQASQDGE) are disordered. Positions 92–103 (QGGGGGGSGSGQ) are enriched in gly residues.

This sequence belongs to the UPF0229 family.

The polypeptide is UPF0229 protein YeaH (Salmonella enteritidis PT4 (strain P125109)).